The primary structure comprises 116 residues: Flagellar transcriptional regulator FlhD (116 aa).

Belongs to the FlhD family. Homodimer; disulfide-linked. Forms a heterohexamer composed of two FlhC and four FlhD subunits. Each FlhC binds a FlhD dimer, forming a heterotrimer, and a hexamer assembles by dimerization of two heterotrimers.

It localises to the cytoplasm. Its function is as follows. Functions in complex with FlhC as a master transcriptional regulator that regulates transcription of several flagellar and non-flagellar operons by binding to their promoter region. Activates expression of class 2 flagellar genes, including fliA, which is a flagellum-specific sigma factor that turns on the class 3 genes. Also regulates genes whose products function in a variety of physiological pathways. This Yersinia pseudotuberculosis serotype O:1b (strain IP 31758) protein is Flagellar transcriptional regulator FlhD.